Consider the following 184-residue polypeptide: Sec-independent protein translocase protein TatB (184 aa).

Residues 1-21 (MFDIGFSELVLLFVVGLIVLG) form a helical membrane-spanning segment. The span at 149-168 (AEEGEPMLEMGESDFSEDEQ) shows a compositional bias: acidic residues. The segment at 149 to 184 (AEEGEPMLEMGESDFSEDEQATASSNETIENIKEKV) is disordered.

The protein belongs to the TatB family. In terms of assembly, the Tat system comprises two distinct complexes: a TatABC complex, containing multiple copies of TatA, TatB and TatC subunits, and a separate TatA complex, containing only TatA subunits. Substrates initially bind to the TatABC complex, which probably triggers association of the separate TatA complex to form the active translocon.

It localises to the cell inner membrane. Part of the twin-arginine translocation (Tat) system that transports large folded proteins containing a characteristic twin-arginine motif in their signal peptide across membranes. Together with TatC, TatB is part of a receptor directly interacting with Tat signal peptides. TatB may form an oligomeric binding site that transiently accommodates folded Tat precursor proteins before their translocation. The sequence is that of Sec-independent protein translocase protein TatB from Histophilus somni (strain 129Pt) (Haemophilus somnus).